The primary structure comprises 147 residues: MERTFVYLKPNTIQRQLIGEVISRFERKGLKIVALKMLKMTMEQAEKLYEEHKGKDFYKPLLKFVTSGPIVAMILEGPRAVEVVRHVIGKTDPLEANSGTIRGEFGVTIRKNIVHASDSPEHAKHEMSIFFDTSEIVDYKLLLEEQF.

ATP contacts are provided by K9, F57, R85, T91, R102, and N112. H115 (pros-phosphohistidine intermediate) is an active-site residue.

This sequence belongs to the NDK family. As to quaternary structure, homotetramer. The cofactor is Mg(2+).

The protein localises to the cytoplasm. It catalyses the reaction a 2'-deoxyribonucleoside 5'-diphosphate + ATP = a 2'-deoxyribonucleoside 5'-triphosphate + ADP. It carries out the reaction a ribonucleoside 5'-diphosphate + ATP = a ribonucleoside 5'-triphosphate + ADP. In terms of biological role, major role in the synthesis of nucleoside triphosphates other than ATP. The ATP gamma phosphate is transferred to the NDP beta phosphate via a ping-pong mechanism, using a phosphorylated active-site intermediate. The polypeptide is Nucleoside diphosphate kinase (Kosmotoga olearia (strain ATCC BAA-1733 / DSM 21960 / TBF 19.5.1)).